We begin with the raw amino-acid sequence, 171 residues long: Adenine phosphoribosyltransferase (171 aa).

It belongs to the purine/pyrimidine phosphoribosyltransferase family. Homodimer.

It is found in the cytoplasm. The enzyme catalyses AMP + diphosphate = 5-phospho-alpha-D-ribose 1-diphosphate + adenine. It participates in purine metabolism; AMP biosynthesis via salvage pathway; AMP from adenine: step 1/1. In terms of biological role, catalyzes a salvage reaction resulting in the formation of AMP, that is energically less costly than de novo synthesis. This chain is Adenine phosphoribosyltransferase, found in Pelotomaculum thermopropionicum (strain DSM 13744 / JCM 10971 / SI).